The sequence spans 374 residues: Ribonuclease D (374 aa).

In terms of domain architecture, 3'-5' exonuclease spans 3-171 (YQLITTDDGL…MAIRLVEETT (169 aa)). Positions 210-289 (KGRHLACLQK…AETQTMDAAE (80 aa)) constitute an HRDC domain.

This sequence belongs to the RNase D family. It depends on a divalent metal cation as a cofactor.

The protein resides in the cytoplasm. The enzyme catalyses Exonucleolytic cleavage that removes extra residues from the 3'-terminus of tRNA to produce 5'-mononucleotides.. Its function is as follows. Exonuclease involved in the 3' processing of various precursor tRNAs. Initiates hydrolysis at the 3'-terminus of an RNA molecule and releases 5'-mononucleotides. The protein is Ribonuclease D of Musicola paradisiaca (strain Ech703) (Dickeya paradisiaca).